We begin with the raw amino-acid sequence, 31 residues long: Photosystem I reaction center subunit XII (31 aa).

The chain crosses the membrane as a helical span at residues 6–25; sequence TQILAALVVALLPAFLAFRL.

It belongs to the PsaM family.

Its subcellular location is the cellular thylakoid membrane. The polypeptide is Photosystem I reaction center subunit XII (Synechocystis sp. (strain ATCC 27184 / PCC 6803 / Kazusa)).